A 248-amino-acid chain; its full sequence is UDP-2,3-diacylglucosamine hydrolase (248 aa).

5 residues coordinate Mn(2+): Asp-7, His-9, Asp-40, Asn-78, and His-113. 78 to 79 (NR) serves as a coordination point for substrate. Substrate contacts are provided by Asp-121, Ser-159, Thr-163, Lys-166, and His-194. Residues His-194 and His-196 each contribute to the Mn(2+) site.

The protein belongs to the LpxH family. Mn(2+) is required as a cofactor.

It localises to the cell inner membrane. It catalyses the reaction UDP-2-N,3-O-bis[(3R)-3-hydroxytetradecanoyl]-alpha-D-glucosamine + H2O = 2-N,3-O-bis[(3R)-3-hydroxytetradecanoyl]-alpha-D-glucosaminyl 1-phosphate + UMP + 2 H(+). The protein operates within glycolipid biosynthesis; lipid IV(A) biosynthesis; lipid IV(A) from (3R)-3-hydroxytetradecanoyl-[acyl-carrier-protein] and UDP-N-acetyl-alpha-D-glucosamine: step 4/6. In terms of biological role, hydrolyzes the pyrophosphate bond of UDP-2,3-diacylglucosamine to yield 2,3-diacylglucosamine 1-phosphate (lipid X) and UMP by catalyzing the attack of water at the alpha-P atom. Involved in the biosynthesis of lipid A, a phosphorylated glycolipid that anchors the lipopolysaccharide to the outer membrane of the cell. This Pseudomonas syringae pv. tomato (strain ATCC BAA-871 / DC3000) protein is UDP-2,3-diacylglucosamine hydrolase.